We begin with the raw amino-acid sequence, 1845 residues long: Helicase swr-1 (1845 aa).

Residues 1–13 (MTTMMTDSGTASD) show a composition bias toward polar residues. A disordered region spans residues 1 to 329 (MTTMMTDSGT…GASRATPRIK (329 aa)). The span at 24 to 38 (NDTTTTTTTTTTPGD) shows a compositional bias: low complexity. Polar residues predominate over residues 63 to 84 (SKSYSSTHHVPAIDNTSTTNAN). Over residues 98 to 108 (SPLSSISSPLS) the composition is skewed to low complexity. Basic and acidic residues predominate over residues 168–180 (PKPESPPWKKFEA). The span at 216–243 (AIQTSPVSNKSSASTSRKPAPASSSNSK) shows a compositional bias: polar residues. Pro residues-rich tracts occupy residues 248-258 (KMPPPPPPPKA) and 283-292 (PRRPATPPKP). Residues 418–493 (PEAEEEPPRQ…EMEASKAKWR (76 aa)) enclose the HSA domain. Disordered stretches follow at residues 539–713 (QKLQ…LFFG) and 749–935 (ELQV…TVKT). The segment covering 549–565 (DGDEITDEDEDEDDEDL) has biased composition (acidic residues). Residues 574-585 (GDEKESDEHSDQ) show a composition bias toward basic and acidic residues. Acidic residues-rich tracts occupy residues 586–608 (GSDE…SSED) and 663–704 (NDDD…DDEP). 2 stretches are compositionally biased toward polar residues: residues 762 to 777 (TNGT…SQTE) and 815 to 834 (TNDS…NQTL). A compositionally biased stretch (low complexity) spans 888 to 897 (SQSQTQSPKT). Residues 898 to 909 (TDTKPTDVDTPH) are compositionally biased toward basic and acidic residues. The span at 922–933 (RQSSPQPTTPTV) shows a compositional bias: polar residues. One can recognise a Helicase ATP-binding domain in the interval 957 to 1122 (AGLYANNTNG…WSLLYFLAPP (166 aa)). 970–977 (DEMGLGKT) is a binding site for ATP. Positions 1073–1076 (DEAH) match the DEAH box motif. The Helicase C-terminal domain occupies 1510 to 1660 (ALDKLLRKLQ…DVVIQEGEFT (151 aa)). Disordered regions lie at residues 1702-1724 (TTGA…PPVR), 1751-1783 (QDEA…GGEE), and 1816-1845 (LEGT…SRKR). A compositionally biased stretch (gly residues) spans 1704 to 1718 (GAGGYDGTADGGGGA). Over residues 1769–1781 (DGLADLDGQLLGG) the composition is skewed to low complexity. Over residues 1826–1845 (DRKKGRDRNRNRKGKDSRKR) the composition is skewed to basic residues.

This sequence belongs to the SNF2/RAD54 helicase family. SWR1 subfamily. As to quaternary structure, component of the SWR1 chromatin-remodeling complex.

It localises to the nucleus. The catalysed reaction is ATP + H2O = ADP + phosphate + H(+). In terms of biological role, catalytic component of the SWR1 complex which mediates the ATP-dependent exchange of histone H2A for the H2A variant H2A.Z leading to transcriptional regulation of selected genes by chromatin remodeling. This is Helicase swr-1 (crf1-1) from Neurospora crassa (strain ATCC 24698 / 74-OR23-1A / CBS 708.71 / DSM 1257 / FGSC 987).